Here is a 1426-residue protein sequence, read N- to C-terminus: MTEALQWARYHWRRLIRGATRDDDSGPYNYSSLLACGRKSSQTPKLSGRHRIVVPHIQPFKDEYEKFSGAYVNNRIRTTKYTLLNFVPRNLFEQFHRAANLYFLFLVVLNWVPLVEAFQKEITMLPLVVVLTIIAIKDGLEDYRKYKIDKQINNLITKVYSRKEKKYIDRCWKDVTVGDFIRLSCNEVIPADMVLLFSTDPDGICHIETSGLDGESNLKQRQVVRGYAEQDSEVDPEKFSSRIECESPNNDLSRFRGFLEHSNKERVGLSKENLLLRGCTIRNTEAVVGIVVYAGHETKAMLNNSGPRYKRSKLERRANTDVLWCVMLLVIMCLTGAVGHGIWLSRYEKMHFFNVPEPDGHIISPLLAGFYMFWTMIILLQVLIPISLYVSIEIVKLGQIYFIQSDVDFYNEKMDSIVQCRALNIAEDLGQIQYLFSDKTGTLTENKMVFRRCSVAGFDYCHEENARRLESYQEAVSEDEDFIDTVSGSLSNMAKPRAPSCRTVHNGPLGNKPSNHLAGSSFTLGSGEGASEVPHSRQAAFSSPIETDVVPDTRLLDKFSQITPRLFMPLDETIQNPPMETLYIIDFFIALAICNTVVVSAPNQPRQKIRHPSLGGLPIKSLEEIKSLFQRWSVRRSSSPSLNSGKEPSSGVPNAFVSRLPLFSRMKPASPVEEEVSQVCESPQCSSSSACCTETEKQHGDAGLLNGKAESLPGQPLACNLCYEAESPDEAALVYAARAYQCTLRSRTPEQVMVDFAALGPLTFQLLHILPFDSVRKRMSVVVRHPLSNQVVVYTKGADSVIMELLSVASPDGASLEKQQMIVREKTQKHLDDYAKQGLRTLCIAKKVMSDTEYAEWLRNHFLAETSIDNREELLLESAMRLENKLTLLGATGIEDRLQEGVPESIEALHKAGIKIWMLTGDKQETAVNIAYACKLLEPDDKLFILNTQSKDACGMLMSTILKELQKKTQALPEQVSLSEDLLQPPVPRDSGLRAGLIITGKTLEFALQESLQKQFLELTSWCQAVVCCRATPLQKSEVVKLVRSHLQVMTLAIGDGANDVSMIQVADIGIGVSGQEGMQAVMASDFAVSQFKHLSKLLLVHGHWCYTRLSNMILYFFYKNVAYVNLLFWYQFFCGFSGTSMTDYWVLIFFNLLFTSAPPVIYGVLEKDVSAETLMQLPELYRSGQKSEAYLPHTFWITLLDAFYQSLVCFFVPYFTYQGSDTDIFAFGNPLNTAALFIVLLHLVIESKSLTWIHLLVIIGSILSYFLFAIVFGAMCVTCNPPSNPYWIMQEHMLDPVFYLVCILTTSIALLPRFVYRVLQGSLFPSPILRAKHFDRLTPEERTKALKKWRGAGKMNQVTSKYANQSAGKSGRRPMPGPSAVFAMKSASSCAIEQGNLSLCETALDQGYSETKAFEMAGPSKGKES.

The Cytoplasmic segment spans residues 1–97; the sequence is MTEALQWARY…PRNLFEQFHR (97 aa). A helical membrane pass occupies residues 98-118; sequence AANLYFLFLVVLNWVPLVEAF. Residues 119 to 121 are Exoplasmic loop-facing; it reads QKE. A helical transmembrane segment spans residues 122-142; sequence ITMLPLVVVLTIIAIKDGLED. Residues 143 to 321 lie on the Cytoplasmic side of the membrane; it reads YRKYKIDKQI…SKLERRANTD (179 aa). Residues 322–342 traverse the membrane as a helical segment; that stretch reads VLWCVMLLVIMCLTGAVGHGI. At 343–365 the chain is on the exoplasmic loop side; that stretch reads WLSRYEKMHFFNVPEPDGHIISP. Residues 366 to 386 form a helical membrane-spanning segment; that stretch reads LLAGFYMFWTMIILLQVLIPI. At 387-1113 the chain is on the cytoplasmic side; that stretch reads SLYVSIEIVK…HWCYTRLSNM (727 aa). The active-site 4-aspartylphosphate intermediate is the Asp-438. Asp-438, Lys-439, and Thr-440 together coordinate ATP. Asp-438 contributes to the Mg(2+) binding site. Thr-440 contacts Mg(2+). Positions 506 to 531 are disordered; that stretch reads NGPLGNKPSNHLAGSSFTLGSGEGAS. A compositionally biased stretch (polar residues) spans 512–524; the sequence is KPSNHLAGSSFTL. ATP-binding positions include Glu-730, Phe-772, Lys-796, Arg-840, Thr-920, Gly-921, Asp-922, 996–1003, Arg-1030, and Lys-1036; that span reads GLIITGKT. Residue Asp-1056 coordinates Mg(2+). Residues Asn-1059 and Asp-1060 each contribute to the ATP site. Asp-1060 contributes to the Mg(2+) binding site. The chain crosses the membrane as a helical span at residues 1114–1134; sequence ILYFFYKNVAYVNLLFWYQFF. Residues 1135 to 1145 are Exoplasmic loop-facing; sequence CGFSGTSMTDY. A helical transmembrane segment spans residues 1146–1166; sequence WVLIFFNLLFTSAPPVIYGVL. Residues 1167 to 1195 are Cytoplasmic-facing; sequence EKDVSAETLMQLPELYRSGQKSEAYLPHT. A helical transmembrane segment spans residues 1196-1216; that stretch reads FWITLLDAFYQSLVCFFVPYF. Over 1217-1224 the chain is Exoplasmic loop; the sequence is TYQGSDTD. Residues 1225–1245 traverse the membrane as a helical segment; that stretch reads IFAFGNPLNTAALFIVLLHLV. The Cytoplasmic portion of the chain corresponds to 1246–1252; the sequence is IESKSLT. The helical transmembrane segment at 1253-1273 threads the bilayer; that stretch reads WIHLLVIIGSILSYFLFAIVF. Topologically, residues 1274–1292 are exoplasmic loop; the sequence is GAMCVTCNPPSNPYWIMQE. Residues 1293–1313 form a helical membrane-spanning segment; sequence HMLDPVFYLVCILTTSIALLP. The Cytoplasmic portion of the chain corresponds to 1314–1426; that stretch reads RFVYRVLQGS…MAGPSKGKES (113 aa). Residue 1364-1371 coordinates ATP; sequence ANQSAGKS.

Belongs to the cation transport ATPase (P-type) (TC 3.A.3) family. Type IV subfamily. As to quaternary structure, component of a P4-ATPase flippase complex which consists of a catalytic alpha subunit ATP10A and an accessory beta subunit TMEM30A. Mg(2+) is required as a cofactor. Autophosphorylated at the conserved aspartate of the P-type ATPase signature sequence. As to expression, expressed in placenta and, to a lesser extent, in kidney.

It is found in the cell membrane. The protein resides in the endoplasmic reticulum membrane. The catalysed reaction is ATP + H2O + phospholipidSide 1 = ADP + phosphate + phospholipidSide 2.. The enzyme catalyses a beta-D-glucosyl-(1&lt;-&gt;1')-N-acylsphing-4-enine(out) + ATP + H2O = a beta-D-glucosyl-(1&lt;-&gt;1')-N-acylsphing-4-enine(in) + ADP + phosphate + H(+). Catalytic component of a P4-ATPase flippase complex, which catalyzes the hydrolysis of ATP coupled to the transport of glucosylceramide (GlcCer) from the outer to the inner leaflet of the plasma membrane. In Homo sapiens (Human), this protein is Phospholipid-transporting ATPase VD.